Reading from the N-terminus, the 432-residue chain is N-acylneuraminate cytidylyltransferase (432 aa).

An N-acetylmethionine modification is found at M1. Positions 1–38 are disordered; the sequence is MDALEKGAVTSGPAPRGRPSRGRPPKLQRSRGAGRGLE. The BC1 motif signature appears at 15 to 31; it reads PRGRPSRGRPPKLQRSR. Positions 18–29 are enriched in basic residues; that stretch reads RPSRGRPPKLQR. Residues R35 and R50 each carry the omega-N-methylarginine modification. Residues R50, N60, R109, S118, S120, and Q141 each coordinate substrate. Residues 198-204 carry the BC2 motif motif; sequence KRPRRQD. R199 is a catalytic residue. The BC3 motif motif lies at 267-274; that stretch reads KEKLKEIK.

Belongs to the CMP-NeuNAc synthase family. As to quaternary structure, homotetramer; the active enzyme is formed by a dimer of dimers. As to expression, highly expressed in brain and heart, and at intermediate level muscle and liver.

The protein localises to the nucleus. The enzyme catalyses an N-acylneuraminate + CTP = a CMP-N-acyl-beta-neuraminate + diphosphate. Its pathway is amino-sugar metabolism; N-acetylneuraminate metabolism. Catalyzes the activation of N-acetylneuraminic acid (NeuNAc) to cytidine 5'-monophosphate N-acetylneuraminic acid (CMP-NeuNAc), a substrate required for the addition of sialic acid. Has some activity toward NeuNAc, N-glycolylneuraminic acid (Neu5Gc) or 2-keto-3-deoxy-D-glycero-D-galacto-nononic acid (KDN). The polypeptide is N-acylneuraminate cytidylyltransferase (Cmas) (Mus musculus (Mouse)).